The sequence spans 996 residues: Filament-like plant protein 5 (996 aa).

The tract at residues 1–20 is disordered; that stretch reads MEGRGWPWKRKSSDKATTEK. Coiled-coil stretches lie at residues 59–94, 133–248, 280–301, and 359–387; these read THMS…TKES, TAED…KYDL, VKKI…RKKL, and LTRR…LQVS. Disordered regions lie at residues 409-482 and 496-534; these read NNDK…SSSR and VGSD…DEDT. Over residues 417-428 the composition is skewed to low complexity; the sequence is SNSRNLSESLSS. Residues 471–482 are compositionally biased toward polar residues; the sequence is VNGSSKPRSSSR. Residues 503 to 527 show a composition bias toward low complexity; sequence ANSASKSSNSVCSRRSVEKQSSSKS. Coiled coils occupy residues 601–622, 737–841, and 876–906; these read QNSE…VANI, DSSC…FTTE, and NQEK…QSLQ. The disordered stretch occupies residues 962–996; that stretch reads IMKSSSVSSSSKEDNEKHTRGLGRFFSSKSKNSAR.

Belongs to the FPP family. In terms of assembly, interacts with WPP/MAF proteins.

This is Filament-like plant protein 5 (FPP5) from Arabidopsis thaliana (Mouse-ear cress).